Here is a 58-residue protein sequence, read N- to C-terminus: UPF0339 protein MA_3316 (58 aa).

This sequence belongs to the UPF0339 family.

In Methanosarcina acetivorans (strain ATCC 35395 / DSM 2834 / JCM 12185 / C2A), this protein is UPF0339 protein MA_3316.